The chain runs to 414 residues: Protein DNA-DAMAGE INDUCIBLE 1 (414 aa).

The 76-residue stretch at 1–76 folds into the Ubiquitin-like domain; it reads MRITVMTAGE…LMMMVSNASS (76 aa). Residues 213 to 292 form the Peptidase A2 domain; it reads LKAFVDSGAQ…NMEFLFGLDM (80 aa). Aspartate 218 is an active-site residue. Residues 332–374 are disordered; that stretch reads ERVPNDASSSGATVPSGFTEKKNNTVANPTSQQPKRQNTSEGP. The span at 355–372 shows a compositional bias: polar residues; sequence NTVANPTSQQPKRQNTSE. The region spanning 374–414 is the UBA domain; it reads PEFEAKIAKLVELGFSRDSVIQALKLFEGNEEQAAGFLFGG.

Belongs to the DDI1 family. Homodimer.

The protein localises to the cytoplasm. It is found in the cytosol. Its function is as follows. Receptor of ubiquitinated protein targeted to ubiquitin/proteasome-mediated proteolysis (UPP). Relatively weak affinity for both 'Lys-48'- and 'Lys-63'-linked ubiquitin chains with a slight preference for 'Lys-48-'linked chains of three or more ubiquitin units. The protein is Protein DNA-DAMAGE INDUCIBLE 1 of Arabidopsis thaliana (Mouse-ear cress).